The primary structure comprises 396 residues: Elongation factor Tu (396 aa).

Positions 10–205 (KPHVNIGTIG…AVDESIPDPV (196 aa)) constitute a tr-type G domain. A G1 region spans residues 19 to 26 (GHVDHGKT). Residue 19 to 26 (GHVDHGKT) participates in GTP binding. Thr-26 is a binding site for Mg(2+). The interval 62–66 (GITIN) is G2. Residues 83–86 (DAPG) are G3. GTP contacts are provided by residues 83–87 (DAPGH) and 138–141 (NKAD). The G4 stretch occupies residues 138-141 (NKAD). Residues 175-177 (SGL) form a G5 region.

It belongs to the TRAFAC class translation factor GTPase superfamily. Classic translation factor GTPase family. EF-Tu/EF-1A subfamily. As to quaternary structure, monomer.

The protein localises to the cytoplasm. The enzyme catalyses GTP + H2O = GDP + phosphate + H(+). In terms of biological role, GTP hydrolase that promotes the GTP-dependent binding of aminoacyl-tRNA to the A-site of ribosomes during protein biosynthesis. The protein is Elongation factor Tu of Nocardia farcinica (strain IFM 10152).